The chain runs to 429 residues: Enolase (429 aa).

A (2R)-2-phosphoglycerate-binding site is contributed by glutamine 164. Glutamate 206 functions as the Proton donor in the catalytic mechanism. Mg(2+) contacts are provided by aspartate 243, glutamate 286, and aspartate 313. (2R)-2-phosphoglycerate is bound by residues lysine 338, arginine 367, serine 368, and lysine 389. The active-site Proton acceptor is the lysine 338.

Belongs to the enolase family. Mg(2+) serves as cofactor.

The protein localises to the cytoplasm. It is found in the secreted. Its subcellular location is the cell surface. It carries out the reaction (2R)-2-phosphoglycerate = phosphoenolpyruvate + H2O. Its pathway is carbohydrate degradation; glycolysis; pyruvate from D-glyceraldehyde 3-phosphate: step 4/5. Catalyzes the reversible conversion of 2-phosphoglycerate (2-PG) into phosphoenolpyruvate (PEP). It is essential for the degradation of carbohydrates via glycolysis. This is Enolase from Thermosipho melanesiensis (strain DSM 12029 / CIP 104789 / BI429).